Reading from the N-terminus, the 130-residue chain is Fluoride-specific ion channel FluC 2 (130 aa).

4 helical membrane passes run 4–24 (GLSTYKSFFLVAFGAVPGAIC), 38–58 (NLWGILLVNSSACLLLGFFLA), 72–92 (LYLLLCVGFLGSFSTFSSLIL), and 103–123 (WMELFLFTFTSIGLGIIFISL). Na(+) contacts are provided by glycine 82 and serine 85.

This sequence belongs to the fluoride channel Fluc/FEX (TC 1.A.43) family.

The protein resides in the cell inner membrane. It carries out the reaction fluoride(in) = fluoride(out). Na(+) is not transported, but it plays an essential structural role and its presence is essential for fluoride channel function. Fluoride-specific ion channel. Important for reducing fluoride concentration in the cell, thus reducing its toxicity. The sequence is that of Fluoride-specific ion channel FluC 2 from Prochlorococcus marinus (strain SARG / CCMP1375 / SS120).